A 303-amino-acid polypeptide reads, in one-letter code: MEAAITQRIQYPSWVDCRKVECKPQRGSLRYSQQVKVDRRFRGLSLARLQPERRNDQRRAVSPAVSCSDNNSSALLETGSVYPFDEDILKRKAEEVKPYLNGRSMYLVGMMGSGKTTVGKLMSKVLGYTFFDCDTLIEQAMNGTSVAEIFVHHGENFFRGKETDALKKLSSRYQVVVSTGGGAVIRPINWKYMHKGISIWLDVPLEALAHRIAAVGTDSRPLLHDESGDAYSVAFKRLSAIWDERGEAYTNANARVSLENIAAKRGYKNVSDLTPTEIAIEAFEQVLSFLEKEETMEIPDGDL.

A chloroplast-targeting transit peptide spans 1 to 66 (MEAAITQRIQ…QRRAVSPAVS (66 aa)). Residue 109-116 (GMMGSGKT) participates in ATP binding. T116 is a Mg(2+) binding site. Positions 134, 159, and 181 each coordinate substrate. An ATP-binding site is contributed by R220.

This sequence belongs to the shikimate kinase family. In terms of assembly, homodimer. The cofactor is Mg(2+).

The protein localises to the plastid. The protein resides in the chloroplast. It catalyses the reaction shikimate + ATP = 3-phosphoshikimate + ADP + H(+). Its pathway is metabolic intermediate biosynthesis; chorismate biosynthesis; chorismate from D-erythrose 4-phosphate and phosphoenolpyruvate: step 5/7. Catalyzes the specific phosphorylation of the 3-hydroxyl group of shikimic acid using ATP as a cosubstrate. The polypeptide is Shikimate kinase 1, chloroplastic (SK1) (Arabidopsis thaliana (Mouse-ear cress)).